We begin with the raw amino-acid sequence, 219 residues long: Charged multivesicular body protein 5 (219 aa).

Residues 1-10 are compositionally biased toward basic residues; sequence MNRLFGKAKP. The tract at residues 1 to 21 is disordered; that stretch reads MNRLFGKAKPKAPPPSLTDCI. The (Microbial infection) N6-stearoyl lysine moiety is linked to residue K7. Positions 26–179 form a coiled coil; it reads SRAESIDKKI…LGDELLADED (154 aa). S86 carries the post-translational modification Phosphoserine. The interaction with VTA1 stretch occupies residues 121–158; sequence KQVKIDQIEDLQDQLEDMMEDANEIQEALSRSYGTPEL. Positions 188-219 are disordered; that stretch reads SAPAIPEGVPTDTKNKDGVLVDEFGLPQIPAS.

Belongs to the SNF7 family. As to quaternary structure, probable peripherally associated component of the endosomal sorting required for transport complex III (ESCRT-III). ESCRT-III components are thought to multimerize to form a flat lattice on the perimeter membrane of the endosome. Several assembly forms of ESCRT-III may exist that interact and act sequentially. Interacts with VTA1; the interaction involves soluble CHMP5. Interacts with CHMP2A. Interacts with NOD2. Interacts with BROX. In terms of processing, (Microbial infection) Stearoylated By S.flexneri N-epsilon-fatty acyltransferase IcsB, promoting S.flexneri evasion of autophagy. ISGylated. Isgylation inhibits its interaction with VTA1.

It localises to the cytoplasm. Its subcellular location is the cytosol. It is found in the endosome membrane. The protein resides in the midbody. Probable peripherally associated component of the endosomal sorting required for transport complex III (ESCRT-III) which is involved in multivesicular bodies (MVBs) formation and sorting of endosomal cargo proteins into MVBs. MVBs contain intraluminal vesicles (ILVs) that are generated by invagination and scission from the limiting membrane of the endosome and mostly are delivered to lysosomes enabling degradation of membrane proteins, such as stimulated growth factor receptors, lysosomal enzymes and lipids. The MVB pathway appears to require the sequential function of ESCRT-O, -I,-II and -III complexes. ESCRT-III proteins mostly dissociate from the invaginating membrane before the ILV is released. The ESCRT machinery also functions in topologically equivalent membrane fission events, such as the terminal stages of cytokinesis and the budding of enveloped viruses (HIV-1 and other lentiviruses). ESCRT-III proteins are believed to mediate the necessary vesicle extrusion and/or membrane fission activities, possibly in conjunction with the AAA ATPase VPS4. Involved in HIV-1 p6- and p9-dependent virus release. The sequence is that of Charged multivesicular body protein 5 (CHMP5) from Homo sapiens (Human).